Here is a 119-residue protein sequence, read N- to C-terminus: Large ribosomal subunit protein bL20 (119 aa).

This sequence belongs to the bacterial ribosomal protein bL20 family.

Binds directly to 23S ribosomal RNA and is necessary for the in vitro assembly process of the 50S ribosomal subunit. It is not involved in the protein synthesizing functions of that subunit. The protein is Large ribosomal subunit protein bL20 of Caldanaerobacter subterraneus subsp. tengcongensis (strain DSM 15242 / JCM 11007 / NBRC 100824 / MB4) (Thermoanaerobacter tengcongensis).